Reading from the N-terminus, the 1229-residue chain is ABC transporter B family member 22 (1229 aa).

The next 6 helical transmembrane spans lie at 22–42, 69–89, 145–167, 171–193, 251–271, and 274–294; these read MGLG…IFFI, VALL…GYCW, LPNF…IMLW, IVGF…ALIN, GIAI…TWYG, and MVMY…CITY. Residues 22–311 form the ABC transmembrane type-1 1 domain; sequence MGLGLIGAVG…GLSNLKYFSE (290 aa). The ABC transporter 1 domain maps to 346–582; sequence VQFKHVKFMY…VDGQYTSLVR (237 aa). 381-388 provides a ligand contact to ATP; sequence GGSGSGKS. 2 N-linked (GlcNAc...) asparagine glycosylation sites follow: Asn-529 and Asn-594. The next 2 membrane-spanning stretches (helical) occupy residues 661-681 and 703-723; these read ALYG…YAYA and IYVL…IIQQ. In terms of domain architecture, ABC transmembrane type-1 2 spans 661-949; the sequence is ALYGCLSAVL…AGAMTMDLAK (289 aa). A glycan (N-linked (GlcNAc...) asparagine) is linked at Asn-758. The next 4 membrane-spanning stretches (helical) occupy residues 782-800, 807-823, 885-908, and 923-943; these read VSLL…TLGL, SIVM…CFYT, WLAG…NYWY, and FFEL…AGAM. The 239-residue stretch at 984-1222 folds into the ABC transporter 2 domain; the sequence is IKFVNVDFAY…GPTGVYFSLV (239 aa). A glycan (N-linked (GlcNAc...) asparagine) is linked at Asn-1004. 1019–1026 provides a ligand contact to ATP; sequence GPSGSGKS. N-linked (GlcNAc...) asparagine glycosylation occurs at Asn-1157.

Belongs to the ABC transporter superfamily. ABCB family. Multidrug resistance exporter (TC 3.A.1.201) subfamily.

The protein localises to the membrane. This chain is ABC transporter B family member 22 (ABCB22), found in Arabidopsis thaliana (Mouse-ear cress).